Consider the following 943-residue polypeptide: Translation initiation factor IF-2 (943 aa).

The disordered stretch occupies residues 29-357; sequence LSVKSHSSSV…KPVTERKFHE (329 aa). 5 stretches are compositionally biased toward basic and acidic residues: residues 69 to 82, 112 to 137, 145 to 155, 163 to 196, and 224 to 253; these read PKEEKVEPKVDKAS, FKAEREARAKAEAERRKNGGGRDNRN, QGKRHNNDRRN, DHNKGNRDNSTNHDRNFQGKLRNDQNQNNRRDNA, and RQSETRFREEKAAEQRRAKEQEKARKEKQQ. Low complexity predominate over residues 254 to 266; that stretch reads AEVAVQKAAAETK. Basic and acidic residues predominate over residues 296-309; sequence KSRDNRRVNEDGPK. The segment covering 313-332 has biased composition (low complexity); that stretch reads NNKWNNQNQVRNQRNSNWNK. The region spanning 445-614 is the tr-type G domain; it reads ERAPVVTIMG…LLVAEVEELK (170 aa). The G1 stretch occupies residues 454 to 461; that stretch reads GHVDHGKT. 454–461 is a binding site for GTP; the sequence is GHVDHGKT. The segment at 479–483 is G2; sequence GITQH. A G3 region spans residues 500–503; it reads DTPG. GTP is bound by residues 500-504 and 554-557; these read DTPGH and NKID. The segment at 554 to 557 is G4; it reads NKID. Positions 590 to 592 are G5; it reads SAK.

This sequence belongs to the TRAFAC class translation factor GTPase superfamily. Classic translation factor GTPase family. IF-2 subfamily.

The protein resides in the cytoplasm. One of the essential components for the initiation of protein synthesis. Protects formylmethionyl-tRNA from spontaneous hydrolysis and promotes its binding to the 30S ribosomal subunits. Also involved in the hydrolysis of GTP during the formation of the 70S ribosomal complex. This Streptococcus thermophilus (strain CNRZ 1066) protein is Translation initiation factor IF-2.